The chain runs to 93 residues: Small ribosomal subunit protein uS19 (93 aa).

Belongs to the universal ribosomal protein uS19 family.

Its function is as follows. Protein S19 forms a complex with S13 that binds strongly to the 16S ribosomal RNA. The polypeptide is Small ribosomal subunit protein uS19 (Geotalea daltonii (strain DSM 22248 / JCM 15807 / FRC-32) (Geobacter daltonii)).